Here is a 160-residue protein sequence, read N- to C-terminus: Probable cyclic pyranopterin monophosphate synthase (160 aa).

A compositionally biased stretch (basic and acidic residues) spans 1–12; that stretch reads MSDDSELTHVTD. A disordered region spans residues 1-24; that stretch reads MSDDSELTHVTDDGDAQMVDVGEK. Substrate contacts are provided by residues 78–80 and 114–115; these read MCH and ME. D129 is a catalytic residue.

Belongs to the MoaC family. As to quaternary structure, homohexamer; trimer of dimers.

The catalysed reaction is (8S)-3',8-cyclo-7,8-dihydroguanosine 5'-triphosphate = cyclic pyranopterin phosphate + diphosphate. It participates in cofactor biosynthesis; molybdopterin biosynthesis. Its function is as follows. Catalyzes the conversion of (8S)-3',8-cyclo-7,8-dihydroguanosine 5'-triphosphate to cyclic pyranopterin monophosphate (cPMP). This Natronomonas pharaonis (strain ATCC 35678 / DSM 2160 / CIP 103997 / JCM 8858 / NBRC 14720 / NCIMB 2260 / Gabara) (Halobacterium pharaonis) protein is Probable cyclic pyranopterin monophosphate synthase.